Consider the following 228-residue polypeptide: Triosephosphate isomerase (228 aa).

11-13 contributes to the substrate binding site; sequence NFK. The active-site Electrophile is His-95. The active-site Proton acceptor is Glu-143. Substrate contacts are provided by residues Ile-148, Gly-183, and 204-205; that span reads AS.

Belongs to the triosephosphate isomerase family. Homotetramer; dimer of dimers.

It localises to the cytoplasm. The catalysed reaction is D-glyceraldehyde 3-phosphate = dihydroxyacetone phosphate. The protein operates within carbohydrate biosynthesis; gluconeogenesis. It functions in the pathway carbohydrate degradation; glycolysis; D-glyceraldehyde 3-phosphate from glycerone phosphate: step 1/1. In terms of biological role, involved in the gluconeogenesis. Catalyzes stereospecifically the conversion of dihydroxyacetone phosphate (DHAP) to D-glyceraldehyde-3-phosphate (G3P). The sequence is that of Triosephosphate isomerase from Pyrococcus horikoshii (strain ATCC 700860 / DSM 12428 / JCM 9974 / NBRC 100139 / OT-3).